The primary structure comprises 549 residues: Eukaryotic translation initiation factor 3 subunit D-2 (549 aa).

Residues 107–157 (ARVKGRSGRGPGMLGVAGSMAGGGTTSGSTKYGKGRESRRNQGRRFARNAP) form a disordered region. Over residues 114-132 (GRGPGMLGVAGSMAGGGTT) the composition is skewed to gly residues. The interval 288 to 302 (QFDLLTVNETSLEPP) is RNA gate. A disordered region spans residues 527–549 (NSFDSDAEDEENSSEPFANSLDN). Residues 529-539 (FDSDAEDEENS) show a composition bias toward acidic residues.

The protein belongs to the eIF-3 subunit D family. Component of the eukaryotic translation initiation factor 3 (eIF-3) complex. The eIF-3 complex interacts with pix.

It localises to the cytoplasm. MRNA cap-binding component of the eukaryotic translation initiation factor 3 (eIF-3) complex, which is involved in protein synthesis of a specialized repertoire of mRNAs and, together with other initiation factors, stimulates binding of mRNA and methionyl-tRNAi to the 40S ribosome. The eIF-3 complex specifically targets and initiates translation of a subset of mRNAs involved in cell proliferation. In the eIF-3 complex, eif3d specifically recognizes and binds the 7-methylguanosine cap of a subset of mRNAs. The sequence is that of Eukaryotic translation initiation factor 3 subunit D-2 from Drosophila ananassae (Fruit fly).